A 593-amino-acid chain; its full sequence is Glutamyl-tRNA(Gln) amidotransferase subunit B, mitochondrial (593 aa).

A mitochondrion-targeting transit peptide spans 1–49 (MLRPWLRQSTRAARSLPCCQCPRPYSSRLPTLTSPSSSVRRLQTSASES). The span at 27 to 42 (SRLPTLTSPSSSVRRL) shows a compositional bias: low complexity. Residues 27 to 80 (SRLPTLTSPSSSVRRLQTSASESQDRVPLRKQLKQNAKALKAEKRQRRESEEAS) are disordered. A compositionally biased stretch (basic and acidic residues) spans 66 to 80 (LKAEKRQRRESEEAS).

This sequence belongs to the GatB/GatE family. GatB subfamily. Subunit of the heterotrimeric GatCAB amidotransferase (AdT) complex, composed of A, B and C subunits.

Its subcellular location is the mitochondrion. It carries out the reaction L-glutamyl-tRNA(Gln) + L-glutamine + ATP + H2O = L-glutaminyl-tRNA(Gln) + L-glutamate + ADP + phosphate + H(+). Functionally, allows the formation of correctly charged Gln-tRNA(Gln) through the transamidation of misacylated Glu-tRNA(Gln) in the mitochondria. The reaction takes place in the presence of glutamine and ATP through an activated gamma-phospho-Glu-tRNA(Gln). The polypeptide is Glutamyl-tRNA(Gln) amidotransferase subunit B, mitochondrial (Aspergillus oryzae (strain ATCC 42149 / RIB 40) (Yellow koji mold)).